The following is a 231-amino-acid chain: NADH-ubiquinone oxidoreductase chain 4 (231 aa).

The next 6 membrane-spanning stretches (helical) occupy residues Pro1–Ile21, Val34–Leu54, Ser61–Ile80, Trp84–Leu106, Ile118–Leu138, and Thr169–Leu189.

Belongs to the complex I subunit 4 family.

Its subcellular location is the mitochondrion membrane. The catalysed reaction is a ubiquinone + NADH + 5 H(+)(in) = a ubiquinol + NAD(+) + 4 H(+)(out). In terms of biological role, core subunit of the mitochondrial membrane respiratory chain NADH dehydrogenase (Complex I) that is believed to belong to the minimal assembly required for catalysis. Complex I functions in the transfer of electrons from NADH to the respiratory chain. The immediate electron acceptor for the enzyme is believed to be ubiquinone. The polypeptide is NADH-ubiquinone oxidoreductase chain 4 (MT-ND4) (Porthidium nasutum (Hognosed pitviper)).